Reading from the N-terminus, the 461-residue chain is Putative aldehyde dehydrogenase FUS7 (461 aa).

NAD(+) is bound at residue 220-225; it reads GSTTTG. Residues E242 and C276 contribute to the active site.

This sequence belongs to the aldehyde dehydrogenase family.

The enzyme catalyses an aldehyde + NAD(+) + H2O = a carboxylate + NADH + 2 H(+). In terms of biological role, putative aldehyde dehydrogenase; part of the gene cluster that mediates the biosynthesis of the mycotoxin fusarin C. Within the cluster, FUS1, FUS2, FUS8 and FUS9 are sufficient for fusarin production. The other FUS cluster members are not essential for fusarin C biosynthesis. The protein is Putative aldehyde dehydrogenase FUS7 of Gibberella fujikuroi (strain CBS 195.34 / IMI 58289 / NRRL A-6831) (Bakanae and foot rot disease fungus).